The following is a 426-amino-acid chain: Elongation factor 1-alpha (426 aa).

One can recognise a tr-type G domain in the interval 5-221; it reads KPHMNLAVIG…DTFKEPDKPT (217 aa). The tract at residues 14-21 is G1; it reads GHIDHGKS. Residue 14–21 coordinates GTP; that stretch reads GHIDHGKS. Ser21 lines the Mg(2+) pocket. Positions 70 to 74 are G2; that stretch reads GITID. Residues 91–94 form a G3 region; it reads DCPG. GTP-binding positions include 91–95 and 146–149; these read DCPGH and NKMD. The segment at 146–149 is G4; the sequence is NKMD. The segment at 185–187 is G5; it reads SSF.

This sequence belongs to the TRAFAC class translation factor GTPase superfamily. Classic translation factor GTPase family. EF-Tu/EF-1A subfamily.

The protein localises to the cytoplasm. It carries out the reaction GTP + H2O = GDP + phosphate + H(+). Functionally, GTP hydrolase that promotes the GTP-dependent binding of aminoacyl-tRNA to the A-site of ribosomes during protein biosynthesis. The chain is Elongation factor 1-alpha from Methanosphaerula palustris (strain ATCC BAA-1556 / DSM 19958 / E1-9c).